Consider the following 248-residue polypeptide: UPF0328 protein ECU06_0030/ECU06_1690/ECU11_0020 (248 aa).

Disordered regions lie at residues 1–34 (MVRH…HPSR) and 51–81 (ASAE…ILPD). Polar residues-rich tracts occupy residues 10-19 (PKTTNPNPES) and 61-76 (QNLS…THQS).

This sequence belongs to the UPF0328 family.

The protein is UPF0328 protein ECU06_0030/ECU06_1690/ECU11_0020 of Encephalitozoon cuniculi (strain GB-M1) (Microsporidian parasite).